We begin with the raw amino-acid sequence, 363 residues long: Dihydroorotate dehydrogenase (quinone) (363 aa).

FMN contacts are provided by residues 67–71 (AGFDK) and threonine 91. Lysine 71 is a binding site for substrate. 116 to 120 (NRMGF) lines the substrate pocket. Positions 156 and 189 each coordinate FMN. Asparagine 189 is a substrate binding site. Catalysis depends on serine 192, which acts as the Nucleophile. Residue asparagine 194 coordinates substrate. FMN-binding residues include lysine 231 and threonine 259. Position 260–261 (260–261 (NT)) interacts with substrate. FMN is bound by residues glycine 287, glycine 316, and 337–338 (YT).

It belongs to the dihydroorotate dehydrogenase family. Type 2 subfamily. Monomer. The cofactor is FMN.

The protein localises to the cell membrane. The enzyme catalyses (S)-dihydroorotate + a quinone = orotate + a quinol. Its pathway is pyrimidine metabolism; UMP biosynthesis via de novo pathway; orotate from (S)-dihydroorotate (quinone route): step 1/1. In terms of biological role, catalyzes the conversion of dihydroorotate to orotate with quinone as electron acceptor. This is Dihydroorotate dehydrogenase (quinone) from Kocuria rhizophila (strain ATCC 9341 / DSM 348 / NBRC 103217 / DC2201).